Consider the following 255-residue polypeptide: Major prion protein (255 aa).

An N-terminal signal peptide occupies residues 1–24; sequence MVKSHIGSWILVLFVAMWSDVGLC. The interaction with ADGRG6 stretch occupies residues 25-41; it reads KKRPKPGGGWNTGGSRY. The tract at residues 25 to 232 is interaction with GRB2, ERI3 and SYN1; it reads KKRPKPGGGW…ESEAYYQRGA (208 aa). A disordered region spans residues 28-110; that stretch reads PKPGGGWNTG…QWNKPSKPKT (83 aa). 5 tandem repeats follow at residues 54–62, 63–70, 71–78, 79–86, and 87–94. The tract at residues 54–94 is 5 X 8 AA tandem repeats of P-H-G-G-G-W-G-Q; that stretch reads PQGGGGWGQPHGGGWGQPHGGGWGQPHGGGWGQPHGGGGWG. Residues 55–97 are compositionally biased toward gly residues; that stretch reads QGGGGWGQPHGGGWGQPHGGGWGQPHGGGWGQPHGGGGWGQGG. Positions 64, 65, 66, 72, 73, 74, 80, 81, 82, 88, 90, and 91 each coordinate Cu(2+). Residues Asn-174, Asn-184, and Asn-199 are each glycosylated (N-linked (GlcNAc...) asparagine). The cysteines at positions 182 and 216 are disulfide-linked. A lipid anchor (GPI-anchor amidated alanine) is attached at Ala-232. Positions 233–255 are cleaved as a propeptide — removed in mature form; it reads SVILFSSPPVILLVSFLIFLIVG.

It belongs to the prion family. As to quaternary structure, monomer and homodimer. Has a tendency to aggregate into amyloid fibrils containing a cross-beta spine, formed by a steric zipper of superposed beta-strands. Soluble oligomers may represent an intermediate stage on the path to fibril formation. Copper binding may promote oligomerization. Interacts with GRB2, APP, ERI3/PRNPIP and SYN1. Mislocalized cytosolically exposed PrP interacts with MGRN1; this interaction alters MGRN1 subcellular location and causes lysosomal enlargement. Interacts with APP. Interacts with KIAA1191. Interacts with ADGRG6.

It localises to the cell membrane. It is found in the golgi apparatus. Its function is as follows. Its primary physiological function is unclear. May play a role in neuronal development and synaptic plasticity. May be required for neuronal myelin sheath maintenance. May promote myelin homeostasis through acting as an agonist for ADGRG6 receptor. May play a role in iron uptake and iron homeostasis. Soluble oligomers are toxic to cultured neuroblastoma cells and induce apoptosis (in vitro). Association with GPC1 (via its heparan sulfate chains) targets PRNP to lipid rafts. Also provides Cu(2+) or Zn(2+) for the ascorbate-mediated GPC1 deaminase degradation of its heparan sulfate side chains. This Canis lupus familiaris (Dog) protein is Major prion protein (PRNP).